The primary structure comprises 38 residues: Defensin-1 (38 aa).

Cystine bridges form between Cys4–Cys25, Cys11–Cys33, and Cys15–Cys35.

It is found in the secreted. In terms of biological role, has antibacterial activity against the Gram-positive bacteria L.lactis and S.aureus, and against the Gram-negative bacteria E.coli D32 and V.parahemolyticus. This chain is Defensin-1, found in Crassostrea virginica (Eastern oyster).